The chain runs to 1257 residues: Probable aldehyde oxidase gad-3 (1257 aa).

A 2Fe-2S ferredoxin-type domain is found at 4–91; the sequence is TGIFFNVNGK…KTFVITVEGV (88 aa). 4 residues coordinate [2Fe-2S] cluster: Cys43, Cys48, Cys51, and Cys73. In terms of domain architecture, FAD-binding PCMH-type spans 229–459; it reads LKGDRIELLL…TSLEVHIDAL (231 aa). Catalysis depends on Glu1208, which acts as the Proton acceptor.

This sequence belongs to the xanthine dehydrogenase family. Requires [2Fe-2S] cluster as cofactor. The cofactor is FAD. Mo-molybdopterin serves as cofactor.

The enzyme catalyses an aldehyde + O2 + H2O = a carboxylate + H2O2 + H(+). Functionally, may be involved in the metabolism of 1-methylnicotinamide (MNA). Linked to regulation of longevity through generation of reactive oxygen species, where it probably functions in a pathway downstream of the sirtuin sir-2.1 and the nicotinamide N-methyltransferase anmt-1. In Caenorhabditis elegans, this protein is Probable aldehyde oxidase gad-3.